Here is a 492-residue protein sequence, read N- to C-terminus: Glutamyl-tRNA(Gln) amidotransferase subunit B, mitochondrial (492 aa).

The protein belongs to the GatB/GatE family. GatB subfamily. In terms of assembly, subunit of the heterotrimeric GatFAB amidotransferase (AdT) complex, composed of A, B and F subunits.

The protein localises to the mitochondrion. The catalysed reaction is L-glutamyl-tRNA(Gln) + L-glutamine + ATP + H2O = L-glutaminyl-tRNA(Gln) + L-glutamate + ADP + phosphate + H(+). Functionally, allows the formation of correctly charged Gln-tRNA(Gln) through the transamidation of misacylated Glu-tRNA(Gln) in the mitochondria. The reaction takes place in the presence of glutamine and ATP through an activated gamma-phospho-Glu-tRNA(Gln). This chain is Glutamyl-tRNA(Gln) amidotransferase subunit B, mitochondrial, found in Komagataella phaffii (strain GS115 / ATCC 20864) (Yeast).